The primary structure comprises 256 residues: Thiazole synthase (256 aa).

The Schiff-base intermediate with DXP role is filled by K95. Residues G156, 182–183 (AG), and 204–205 (NT) contribute to the 1-deoxy-D-xylulose 5-phosphate site.

It belongs to the ThiG family. As to quaternary structure, homotetramer. Forms heterodimers with either ThiH or ThiS.

Its subcellular location is the cytoplasm. It carries out the reaction [ThiS sulfur-carrier protein]-C-terminal-Gly-aminoethanethioate + 2-iminoacetate + 1-deoxy-D-xylulose 5-phosphate = [ThiS sulfur-carrier protein]-C-terminal Gly-Gly + 2-[(2R,5Z)-2-carboxy-4-methylthiazol-5(2H)-ylidene]ethyl phosphate + 2 H2O + H(+). It participates in cofactor biosynthesis; thiamine diphosphate biosynthesis. Its function is as follows. Catalyzes the rearrangement of 1-deoxy-D-xylulose 5-phosphate (DXP) to produce the thiazole phosphate moiety of thiamine. Sulfur is provided by the thiocarboxylate moiety of the carrier protein ThiS. In vitro, sulfur can be provided by H(2)S. This is Thiazole synthase from Shigella flexneri.